The primary structure comprises 185 residues: Ribosome-recycling factor (185 aa).

It belongs to the RRF family.

It is found in the cytoplasm. Functionally, responsible for the release of ribosomes from messenger RNA at the termination of protein biosynthesis. May increase the efficiency of translation by recycling ribosomes from one round of translation to another. The protein is Ribosome-recycling factor of Marinomonas sp. (strain MWYL1).